A 293-amino-acid polypeptide reads, in one-letter code: Nucleotide-binding protein cauri_1197 (293 aa).

ATP is bound at residue 16-23; the sequence is GMSGGGLT. 67 to 70 is a GTP binding site; it reads DVRS.

The protein belongs to the RapZ-like family.

Its function is as follows. Displays ATPase and GTPase activities. In Corynebacterium aurimucosum (strain ATCC 700975 / DSM 44827 / CIP 107346 / CN-1) (Corynebacterium nigricans), this protein is Nucleotide-binding protein cauri_1197.